Here is a 150-residue protein sequence, read N- to C-terminus: Large ribosomal subunit protein bL9 (150 aa).

The protein belongs to the bacterial ribosomal protein bL9 family.

In terms of biological role, binds to the 23S rRNA. This Saccharopolyspora erythraea (strain ATCC 11635 / DSM 40517 / JCM 4748 / NBRC 13426 / NCIMB 8594 / NRRL 2338) protein is Large ribosomal subunit protein bL9.